The chain runs to 212 residues: Thymidylate kinase (212 aa).

10 to 17 (GLEGAGKT) contacts ATP.

This sequence belongs to the thymidylate kinase family.

It carries out the reaction dTMP + ATP = dTDP + ADP. Phosphorylation of dTMP to form dTDP in both de novo and salvage pathways of dTTP synthesis. In Yersinia pestis bv. Antiqua (strain Antiqua), this protein is Thymidylate kinase.